The primary structure comprises 303 residues: Signal recognition particle receptor FtsY (303 aa).

GTP contacts are provided by residues 108–115, 190–194, and 254–257; these read GVNGVGKT, DTAGR, and TKLD.

This sequence belongs to the GTP-binding SRP family. FtsY subfamily. Part of the signal recognition particle protein translocation system, which is composed of SRP and FtsY. SRP is a ribonucleoprotein composed of Ffh and a 4.5S RNA molecule.

It localises to the cell inner membrane. Its subcellular location is the cytoplasm. The enzyme catalyses GTP + H2O = GDP + phosphate + H(+). Involved in targeting and insertion of nascent membrane proteins into the cytoplasmic membrane. Acts as a receptor for the complex formed by the signal recognition particle (SRP) and the ribosome-nascent chain (RNC). Interaction with SRP-RNC leads to the transfer of the RNC complex to the Sec translocase for insertion into the membrane, the hydrolysis of GTP by both Ffh and FtsY, and the dissociation of the SRP-FtsY complex into the individual components. The sequence is that of Signal recognition particle receptor FtsY from Rickettsia typhi (strain ATCC VR-144 / Wilmington).